Consider the following 144-residue polypeptide: MELNNLKPAEGAKHAKRRVGRGIGSGLGKTAGRGHKGQKSRSGGFHKVGFEGGQMPLQRRLPKRGFTSLTKEFVGEVRLSDLEKLPVDEIDLLALKQAGLVGELIKSAKIIATGELKRKVVVKGLGATKGARAAIEAAGGSFAE.

The tract at residues 1–57 (MELNNLKPAEGAKHAKRRVGRGIGSGLGKTAGRGHKGQKSRSGGFHKVGFEGGQMPL) is disordered. Residues 21–31 (RGIGSGLGKTA) are compositionally biased toward gly residues.

The protein belongs to the universal ribosomal protein uL15 family. As to quaternary structure, part of the 50S ribosomal subunit.

Its function is as follows. Binds to the 23S rRNA. The chain is Large ribosomal subunit protein uL15 from Paraburkholderia xenovorans (strain LB400).